The sequence spans 172 residues: UPF0254 protein Mlab_1743 (172 aa).

The protein belongs to the UPF0254 family.

The chain is UPF0254 protein Mlab_1743 from Methanocorpusculum labreanum (strain ATCC 43576 / DSM 4855 / Z).